A 112-amino-acid chain; its full sequence is Cytochrome c-551 (112 aa).

Residues 1 to 20 form the signal peptide; sequence MKSKLSILMIGFALSVLLAA. Cys21 carries the N-palmitoyl cysteine lipid modification. Residue Cys21 is the site of S-diacylglycerol cysteine attachment. Positions 25–35 are enriched in basic and acidic residues; that stretch reads DAKEEKTDTGS. The segment at 25–44 is disordered; it reads DAKEEKTDTGSKTEATASEG. The Cytochrome c domain maps to 39 to 112; that stretch reads ATASEGEELY…VIAKWLSEKK (74 aa). Heme c is bound by residues Cys52, Cys55, His56, and Met91.

Binds 1 heme c group covalently per subunit.

It localises to the cell membrane. Functionally, electron carrier protein. This is Cytochrome c-551 (cccB) from Bacillus subtilis (strain 168).